The primary structure comprises 107 residues: Iron-sulfur cluster assembly protein CyaY (107 aa).

This sequence belongs to the frataxin family.

Its function is as follows. Involved in iron-sulfur (Fe-S) cluster assembly. May act as a regulator of Fe-S biogenesis. The sequence is that of Iron-sulfur cluster assembly protein CyaY from Neisseria meningitidis serogroup A / serotype 4A (strain DSM 15465 / Z2491).